The sequence spans 477 residues: tRNA-2-methylthio-N(6)-dimethylallyladenosine synthase (477 aa).

An MTTase N-terminal domain is found at 3-120 (KKLYIKTWGC…LPEMINELKG (118 aa)). Positions 12, 49, 83, 157, 161, and 164 each coordinate [4Fe-4S] cluster. The 233-residue stretch at 143–375 (RAEGPTAFVS…QQRITQQALR (233 aa)) folds into the Radical SAM core domain. The TRAM domain occupies 378–441 (RHMVGTEQRI…TNSLRGEVVR (64 aa)).

The protein belongs to the methylthiotransferase family. MiaB subfamily. Monomer. The cofactor is [4Fe-4S] cluster.

It is found in the cytoplasm. It catalyses the reaction N(6)-dimethylallyladenosine(37) in tRNA + (sulfur carrier)-SH + AH2 + 2 S-adenosyl-L-methionine = 2-methylsulfanyl-N(6)-dimethylallyladenosine(37) in tRNA + (sulfur carrier)-H + 5'-deoxyadenosine + L-methionine + A + S-adenosyl-L-homocysteine + 2 H(+). Functionally, catalyzes the methylthiolation of N6-(dimethylallyl)adenosine (i(6)A), leading to the formation of 2-methylthio-N6-(dimethylallyl)adenosine (ms(2)i(6)A) at position 37 in tRNAs that read codons beginning with uridine. This is tRNA-2-methylthio-N(6)-dimethylallyladenosine synthase from Alteromonas mediterranea (strain DSM 17117 / CIP 110805 / LMG 28347 / Deep ecotype).